The following is a 494-amino-acid chain: Potassium voltage-gated channel subfamily A member 2 (494 aa).

A disordered region spans residues 1 to 25 (MTVATGDPSDEAAAHPGNPAEYDPD). The interval 1-124 (MTVATGDPSD…YELGDEAIEL (124 aa)) is tetramerization domain. The Cytoplasmic segment spans residues 1 to 159 (MTVATGDPSD…LLFEYPESSG (159 aa)). Residues 160-181 (PARIIAIISVMVILISIVSFCL) form a helical membrane-spanning segment. Over 182 to 216 (ETLPIFRNDDDEPHSVFDTNTNTTIYFTSTYFTDP) the chain is Extracellular. A glycan (N-linked (GlcNAc...) asparagine) is linked at Asn203. A helical membrane pass occupies residues 217 to 238 (FFILETLCIIWFSFEFLVRLFA). Cys239 carries the S-palmitoyl cysteine lipid modification. The Cytoplasmic portion of the chain corresponds to 239 to 249 (CPSKSGFFGNV). Residues 250 to 270 (MNIIDVVAIIPYFITLATELA) form a helical membrane-spanning segment. Over 271-284 (EKPEDGQAGQQAMS) the chain is Extracellular. The helical; Voltage-sensor transmembrane segment at 285-305 (LAILRVIRLVRVFRIFKLSRH) threads the bilayer. Residues 306-320 (SKGLQILGQTLKASM) are Cytoplasmic-facing. Positions 307-320 (KGLQILGQTLKASM) are S4-S5 linker. A helical transmembrane segment spans residues 321–342 (RELGLLIFFLFIGVILFSSAVY). At 343–356 (FAEADEPESQFESI) the chain is on the extracellular side. An intramembrane region (helical) is located at residues 357 to 368 (PDAFWWAVVSMT). The Selectivity filter signature appears at 369–374 (TVGYGD). An intramembrane segment occupies 369–376 (TVGYGDMV). Over 377-383 (PTTIGGK) the chain is Extracellular. A helical membrane pass occupies residues 384-412 (IVGSLCAIAGVLTIALPVPVIVSNFNYFY). Over 413 to 494 (HRETEGEEQA…VNITKMLTDV (82 aa)) the chain is Cytoplasmic. The PDZ-binding signature appears at 492-494 (TDV).

It belongs to the potassium channel family. A (Shaker) (TC 1.A.1.2) subfamily. Kv1.2/KCNA2 sub-subfamily. In terms of assembly, homotetramer and heterotetramer with other family members. In terms of tissue distribution, expressed in oligodendrocytes.

The protein resides in the cell membrane. The catalysed reaction is K(+)(in) = K(+)(out). Its function is as follows. Voltage-gated potassium channel that mediates transmembrane potassium transport in excitable membranes, primarily in the brain and central nervous system. Prevents aberrant action potential firing and regulates neuronal output. Forms tetrameric potassium-selective channels through which potassium ions pass in accordance with their electrochemical gradient. The channel alternates between opened and closed conformations in response to the voltage difference across the membrane. Can form functional homotetrameric channels and heterotetrameric channels with other family members; the channels characteristics depend critically on the types of channel-forming alpha subunits that are present. Channel properties are modulated by cytoplasmic beta subunits that regulate the subcellular location of the alpha subunits. In vivo, membranes probably contain a mixture of heteromeric potassium channel complexes, making it difficult to assign currents observed in intact tissues to any particular potassium channel family member. Homotetrameric KCNA2 forms a delayed-rectifier potassium channel that opens in response to membrane depolarization, followed by slow spontaneous channel closure. Regulates neuronal excitability and plays a role as pacemaker in the regulation of neuronal action potentials. KCNA2-containing channels play a presynaptic role and prevent hyperexcitability and aberrant action potential firing. Response to toxins that are selective for KCNA2-containing potassium channels suggests that in Purkinje cells, dendritic subthreshold KCNA2-containing potassium channels prevent random spontaneous calcium spikes, suppressing dendritic hyperexcitability without hindering the generation of somatic action potentials, and thereby play an important role in motor coordination. Plays a role in the induction of long-term potentiation of neuron excitability in the CA3 layer of the hippocampus. The chain is Potassium voltage-gated channel subfamily A member 2 (kcna2) from Oncorhynchus mykiss (Rainbow trout).